The chain runs to 826 residues: MVELSKKVTGKLDKTTPGIQIWRIENMEMVPVPTKSYGNFYEGDCYVLLSTRKTGSGFSYNIHYWLGKNSSQDEQGAAAIYTTQMDEYLGSVAVQHREVQGHESETFRAYFKQGLIYKQGGVASGMKHVETNTYNVQRLLHVKGKKNVVAAEVEMSWKSFNLGDVFLLDLGQLIIQWNGPESNRAERLRAMTLAKDIRDRERAGRAKVGVVEGENEAASPELMQALTHVLGEKKNIKAATPDEQVHQALNSALKLYHVSDASGNLVIQEVAIRPLTQDMLQHEDCYILDQAGLKIFVWKGKNANKEEKQQAMSRALGFIKAKNYLASTSVETENDGSESAVFRQLFQKWTVPNQTSGLGKTHTVGKVAKVEQVKFDATTMHVKPEVAAQQKMVDDGSGEAEVWRVENQELVPVEKRWLGHFYGGDCYLVLYTYYVGPKVNRIIYIWQGRHASTDELAASAYQAVFLDQKYNNEPVQVRVTMGKEPAHLMAIFKGKMVVYENGSSRAGGTEPASSTRLFHVHGTNEYNTKAFEVPVRAASLNSNDVFVLKTPSSCYLWYGKGCSGDEREMGKMVADIISKTEKPVVAEGQEPPEFWVALGGKTSYANSKRLQEENPSVPPRLFECSNKTGRFLATEIVDFTQDDLDENDVYLLDTWDQIFFWIGKGANESEKEAAAETAQEYLRSHPGSRDLDTPIIVVKQGFEPPTFTGWFMAWDPLCWSDRKSYDELKAELGDNASIGQLVSGLTSKNEVFTATTTLVPTKLETFPLDVLVNTAAEDLPRGVDPSRKENHLSDEDFKAVFGMTRSAFANLPLWKQQNLKKEKGLF.

The interval 1-734 (MVELSKKVTG…YDELKAELGD (734 aa)) is core. A Gelsolin-like 1 repeat occupies 27–76 (MEMVPVPTKSYGNFYEGDCYVLLSTRKTGSGFSYNIHYWLGKNSSQDEQG). 112-119 (KQGLIYKQ) contributes to the a 1,2-diacyl-sn-glycero-3-phospho-(1D-myo-inositol-4,5-bisphosphate) binding site. Residues 129–137 (VETNTYNVQ) are crucial for binding an actin filament. 138 to 146 (RLLHVKGKK) is an a 1,2-diacyl-sn-glycero-3-phospho-(1D-myo-inositol-4,5-bisphosphate) binding site. 5 Gelsolin-like repeats span residues 148–188 (VVAA…AERL), 265–309 (LVIQ…EEKQ), 408–457 (QELV…DELA), 528–568 (TKAF…DERE), and 631–672 (FLAT…SEKE). The segment at 735-826 (NASIGQLVSG…QNLKKEKGLF (92 aa)) is headpiece. The HP domain maps to 760-826 (PTKLETFPLD…QNLKKEKGLF (67 aa)). An absolutely required for activity region spans residues 820–823 (KKEK).

The protein belongs to the villin/gelsolin family. In terms of assembly, monomer. Homodimer. Associates with F-actin; the association with F-actin is inhibited by tropomyosin. Post-translationally, phosphorylated on tyrosine residues. The unphosphorylated form increases the initial rate of actin-nucleating activity, whereas the tyrosine-phosphorylated form inhibits actin-nucleating activity, enhances actin-bundling activity and enhances actin-severing activity by reducing high Ca(2+) requirements. The tyrosine-phosphorylated form does not regulate actin-capping activity. Tyrosine phosphorylation is essential for cell migration: tyrosine phosphorylation sites in the N-terminus half regulate actin reorganization and cell morphology, whereas tyrosine phosphorylation sites in the C-terminus half regulate cell migration. Tyrosine phosphorylation is induced by epidermal growth factor (EGF) and stimulates cell migration. In terms of tissue distribution, specifically expressed in epithelial cells. Component of brush border microvilli.

Its subcellular location is the cytoplasm. The protein localises to the cytoskeleton. The protein resides in the cell projection. It is found in the microvillus. It localises to the lamellipodium. Its subcellular location is the ruffle. The protein localises to the filopodium tip. The protein resides in the filopodium. In terms of biological role, epithelial cell-specific Ca(2+)-regulated actin-modifying protein that modulates the reorganization of microvillar actin filaments. Plays a role in the actin nucleation, actin filament bundle assembly, actin filament capping and severing. Binds phosphatidylinositol 4,5-bisphosphate (PIP2) and lysophosphatidic acid (LPA); binds LPA with higher affinity than PIP2. Binding to LPA increases its phosphorylation by SRC and inhibits all actin-modifying activities. Binding to PIP2 inhibits actin-capping and -severing activities but enhances actin-bundling activity. Regulates the intestinal epithelial cell morphology, cell invasion, cell migration and apoptosis. Protects against apoptosis induced by dextran sodium sulfate (DSS) in the gastrointestinal epithelium. Appears to regulate cell death by maintaining mitochondrial integrity. Enhances hepatocyte growth factor (HGF)-induced epithelial cell motility, chemotaxis and wound repair. Its actin-bundling activity is inhibited by tropomyosin. This is Villin-1 (VIL1) from Gallus gallus (Chicken).